Consider the following 103-residue polypeptide: MSGRGKGGKGLGKGGAKRHRKVLRDNIQGITKPAIRRLARRGGVKRISGLIYEETRGVLKVFLENVIRDAVTYCEHAKRKTVTSMDVVYALKRQGRTLYGFGG.

Positions 1–14 (MSGRGKGGKGLGKG) are enriched in gly residues. Residues 1–20 (MSGRGKGGKGLGKGGAKRHR) are disordered. Residue Ser2 is modified to N-acetylserine. N6-acetyl-N6-methyllysine; alternate occurs at positions 6 and 13. The DNA-binding element occupies 17 to 21 (KRHRK). N6-methyllysine is present on Lys21.

It belongs to the histone H4 family. As to quaternary structure, the nucleosome is a histone octamer containing two molecules each of H2A, H2B, H3 and H4 assembled in one H3-H4 heterotetramer and two H2A-H2B heterodimers. The octamer wraps approximately 147 bp of DNA.

Its subcellular location is the nucleus. It localises to the chromosome. Its function is as follows. Core component of nucleosome. Nucleosomes wrap and compact DNA into chromatin, limiting DNA accessibility to the cellular machineries which require DNA as a template. Histones thereby play a central role in transcription regulation, DNA repair, DNA replication and chromosomal stability. DNA accessibility is regulated via a complex set of post-translational modifications of histones, also called histone code, and nucleosome remodeling. The sequence is that of Histone H4 from Solaster stimpsoni (Striped sun sea star).